The primary structure comprises 486 residues: Cardiolipin synthase A (486 aa).

Helical transmembrane passes span 3-23 (TFYT…IAGV) and 38-58 (MAWL…YLSV). PLD phosphodiesterase domains follow at residues 219–246 (MDLR…VDPR) and 399–426 (EGGL…DMRS). Residues H224, K226, D231, H404, K406, and D411 contribute to the active site.

The protein belongs to the phospholipase D family. Cardiolipin synthase subfamily. ClsA sub-subfamily.

Its subcellular location is the cell inner membrane. It catalyses the reaction 2 a 1,2-diacyl-sn-glycero-3-phospho-(1'-sn-glycerol) = a cardiolipin + glycerol. Its function is as follows. Catalyzes the reversible phosphatidyl group transfer from one phosphatidylglycerol molecule to another to form cardiolipin (CL) (diphosphatidylglycerol) and glycerol. This chain is Cardiolipin synthase A, found in Salmonella gallinarum (strain 287/91 / NCTC 13346).